A 673-amino-acid polypeptide reads, in one-letter code: MKMTRLYPLALGGLLLPAIANAQTSQQDESTLEVTASKQSSRSASANNVSSTVVSAPELSDAGVTASDKLPRVLPGLNIENSGNMLFSTISLRGVSSAQDFYNPAVTLYVDGVPQLSTNTIQALTDVQSVELLRGPQGTLYGKSAQGGIINIVTQQPDSTPRGYIEGGVSSRDSYRSKFNLSGPIQDGLLYGSVTLLRQVDDGDMINPATGSDDLGGTRASIGNVKLRLAPDDQPWEMGFAASRECTRATQDAYVGWNDIKGRKLSLSDGSPDPYMRRCTDSQTLSGKYTTDDWVFNLISAWQQQHYSRTFPSGSLIVNMPQRWNQDVQELRAATLGDARTVDMVFGLYRQNTREKLNSAYNMPTMPYLSSTGYTTAETLAAYSDLTWHLTDRFDIGGGVRFSHDKSSTQYHGSMLGNPFGDQGKSNDDQVLGQLSAGYMLTDDWRVYTRIAQGYKPSGYNIVPTAGLDAKPFVAEKSINYELGTRYETADVTLQAATFYTHTKDMQLYSGPVGMQTLSNAGKADATGVELEAKWRFAPGWSWDINGNVIRSEFTNDSELYHGNRVPFVPRYGAGSSVNGVIDTRYGALMPRLAVNLVGPHYFDGDNQLRQGTYATLDSSLGWQATERINISVHVDNLFDRRYRTYGYMNGSSAVAQVNMGRTVGINTRIDFF.

The first 22 residues, 1–22 (MKMTRLYPLALGGLLLPAIANA), serve as a signal peptide directing secretion. The TonB box motif lies at 30-37 (STLEVTAS). A TBDR plug domain is found at 41–155 (SRSASANNVS…QGGIINIVTQ (115 aa)). The TBDR beta-barrel domain occupies 160 to 672 (TPRGYIEGGV…TVGINTRIDF (513 aa)). Residues 657-673 (QVNMGRTVGINTRIDFF) carry the TonB C-terminal box motif.

Belongs to the TonB-dependent receptor family.

The protein localises to the cell outer membrane. Functionally, receptor for the bacteriocin pesticin and for the siderophore yersiniabactin. The polypeptide is Pesticin receptor (fyuA) (Yersinia enterocolitica).